The following is a 218-amino-acid chain: Glutathione S-transferase Mu 5 (218 aa).

Residues 2 to 88 (PMTLGYWDIR…YIARKHNLCG (87 aa)) enclose the GST N-terminal domain. Residues 7 to 8 (YW), 46 to 50 (WLNEK), 59 to 60 (NL), and 72 to 73 (QS) each bind glutathione. Residues 90-207 (TEEEKIRVDI…MKSSQFLRGL (118 aa)) enclose the GST C-terminal domain. Substrate is bound at residue Y116.

Belongs to the GST superfamily. Mu family. In terms of assembly, homodimer.

The protein localises to the cytoplasm. The enzyme catalyses RX + glutathione = an S-substituted glutathione + a halide anion + H(+). Functionally, conjugation of reduced glutathione to a wide number of exogenous and endogenous hydrophobic electrophiles. This is Glutathione S-transferase Mu 5 (GSTM5) from Homo sapiens (Human).